We begin with the raw amino-acid sequence, 526 residues long: Dolichyl pyrophosphate Glc1Man9GlcNAc2 alpha-1,3-glucosyltransferase (526 aa).

11 consecutive transmembrane segments (helical) span residues 9-29 (AGGH…CLLI), 108-128 (FSVI…CKCI), 143-163 (FILS…HIHF), 188-208 (GALL…VAPA), 238-258 (VTSL…PFLA), 334-354 (PLAT…CLWF), 361-380 (GFLR…GWHV), 400-422 (AGDA…PLLF), 427-449 (LPIK…KTLF), 461-481 (TVYL…LPFT), and 487-507 (YPFI…TYAW).

The protein belongs to the ALG6/ALG8 glucosyltransferase family.

The protein localises to the endoplasmic reticulum membrane. It carries out the reaction an alpha-D-Glc-(1-&gt;3)-alpha-D-Man-(1-&gt;2)-alpha-D-Man-(1-&gt;2)-alpha-D-Man-(1-&gt;3)-[alpha-D-Man-(1-&gt;2)-alpha-D-Man-(1-&gt;3)-[alpha-D-Man-(1-&gt;2)-alpha-D-Man-(1-&gt;6)]-alpha-D-Man-(1-&gt;6)]-beta-D-Man-(1-&gt;4)-beta-D-GlcNAc-(1-&gt;4)-alpha-D-GlcNAc-diphospho-di-trans,poly-cis-dolichol + a di-trans,poly-cis-dolichyl beta-D-glucosyl phosphate = an alpha-D-Glc-(1-&gt;3)-alpha-D-Glc-(1-&gt;3)-alpha-D-Man-(1-&gt;2)-alpha-D-Man-(1-&gt;2)-alpha-D-Man-(1-&gt;3)-[alpha-D-Man-(1-&gt;2)-alpha-D-Man-(1-&gt;3)-[alpha-D-Man-(1-&gt;2)-alpha-D-Man-(1-&gt;6)]-alpha-D-Man-(1-&gt;6)]-beta-D-Man-(1-&gt;4)-beta-D-GlcNAc-(1-&gt;4)-alpha-D-GlcNAc-diphospho-di-trans,poly-cis-dolichol + a di-trans,poly-cis-dolichyl phosphate + H(+). Its pathway is protein modification; protein glycosylation. Its function is as follows. Dolichyl pyrophosphate Glc1Man9GlcNAc2 alpha-1,3-glucosyltransferase that operates in the biosynthetic pathway of dolichol-linked oligosaccharides, the glycan precursors employed in protein asparagine (N)-glycosylation. The assembly of dolichol-linked oligosaccharides begins on the cytosolic side of the endoplasmic reticulum membrane and finishes in its lumen. The sequential addition of sugars to dolichol pyrophosphate produces dolichol-linked oligosaccharides containing fourteen sugars, including two GlcNAcs, nine mannoses and three glucoses. Once assembled, the oligosaccharide is transferred from the lipid to nascent proteins by oligosaccharyltransferases. In the lumen of the endoplasmic reticulum, adds the second glucose residue from dolichyl phosphate glucose (Dol-P-Glc) onto the lipid-linked oligosaccharide intermediate Glc(1)Man(9)GlcNAc(2)-PP-Dol to produce Glc(2)Man(9)GlcNAc(2)-PP-Dol. Glc(2)Man(9)GlcNAc(2)-PP-Dol is a substrate for ALG10, the following enzyme in the biosynthetic pathway. Required for PKD1/Polycystin-1 maturation and localization to the plasma membrane of the primary cilia. The polypeptide is Dolichyl pyrophosphate Glc1Man9GlcNAc2 alpha-1,3-glucosyltransferase (Mus musculus (Mouse)).